We begin with the raw amino-acid sequence, 361 residues long: Probable galacturonosyltransferase-like 7 (361 aa).

The helical; Signal-anchor for type II membrane protein transmembrane segment at 1–21 threads the bilayer; it reads MLWIMRFSGLFSAALVIIVLS. The Lumenal portion of the chain corresponds to 22-361; sequence PSLQSFPPAE…PYDLYGHYSR (340 aa). N-linked (GlcNAc...) asparagine glycosylation occurs at Asn217.

It belongs to the glycosyltransferase 8 family.

It localises to the golgi apparatus membrane. It participates in glycan metabolism; pectin biosynthesis. In terms of biological role, may be involved in pectin and/or xylans biosynthesis in cell walls. The polypeptide is Probable galacturonosyltransferase-like 7 (GATL7) (Arabidopsis thaliana (Mouse-ear cress)).